Reading from the N-terminus, the 600-residue chain is Proline dehydrogenase 1, mitochondrial (600 aa).

The interval 155–177 is disordered; that stretch reads AEHKEMESCTSAAERDGSGTNKR. 2 positions are modified to N6-acetyllysine: K368 and K486.

This sequence belongs to the proline oxidase family. The cofactor is FAD. Expressed in lung, skeletal muscle and brain, to a lesser extent in heart and kidney, and weakly in liver, placenta and pancreas.

It localises to the mitochondrion matrix. The catalysed reaction is L-proline + a quinone = (S)-1-pyrroline-5-carboxylate + a quinol + H(+). The protein operates within amino-acid degradation; L-proline degradation into L-glutamate; L-glutamate from L-proline: step 1/2. Converts proline to delta-1-pyrroline-5-carboxylate. The chain is Proline dehydrogenase 1, mitochondrial from Homo sapiens (Human).